A 231-amino-acid chain; its full sequence is Orotidine 5'-phosphate decarboxylase (231 aa).

Substrate-binding positions include aspartate 11, lysine 34, 61 to 70 (DLKLHDIPNT), threonine 117, arginine 179, glutamine 188, glycine 208, and arginine 209. The Proton donor role is filled by lysine 63.

It belongs to the OMP decarboxylase family. Type 1 subfamily. Homodimer.

It catalyses the reaction orotidine 5'-phosphate + H(+) = UMP + CO2. Its pathway is pyrimidine metabolism; UMP biosynthesis via de novo pathway; UMP from orotate: step 2/2. Functionally, catalyzes the decarboxylation of orotidine 5'-monophosphate (OMP) to uridine 5'-monophosphate (UMP). The protein is Orotidine 5'-phosphate decarboxylase of Streptococcus suis (strain 98HAH33).